Reading from the N-terminus, the 124-residue chain is U33-theraphotoxin-Cg1a (124 aa).

An N-terminal signal peptide occupies residues 1–17 (MKFAVAIAFTLLVCVFA). Intrachain disulfides connect C26–C37, C31–C51, C36–C75, C61–C83, and C77–C94. Basic and acidic residues predominate over residues 93–108 (RCQEESGKSDKSKESQ). The disordered stretch occupies residues 93–124 (RCQEESGKSDKSKESQGSDESEESEESKESCG). Positions 109–118 (GSDESEESEE) are enriched in acidic residues.

Belongs to the neurotoxin 32 family. Expressed by the venom gland.

It is found in the secreted. The sequence is that of U33-theraphotoxin-Cg1a from Chilobrachys guangxiensis (Chinese earth tiger tarantula).